The chain runs to 319 residues: Ribose-phosphate pyrophosphokinase (319 aa).

Residues 41 to 43 and 100 to 101 contribute to the ATP site; these read NGE and RQ. Mg(2+) is bound by residues His-134 and Asp-175. Residue Lys-198 is part of the active site. Residues Arg-200, Asp-224, and 228–232 contribute to the D-ribose 5-phosphate site; that span reads DTAGS.

Belongs to the ribose-phosphate pyrophosphokinase family. Class I subfamily. Homohexamer. It depends on Mg(2+) as a cofactor.

It is found in the cytoplasm. It carries out the reaction D-ribose 5-phosphate + ATP = 5-phospho-alpha-D-ribose 1-diphosphate + AMP + H(+). The protein operates within metabolic intermediate biosynthesis; 5-phospho-alpha-D-ribose 1-diphosphate biosynthesis; 5-phospho-alpha-D-ribose 1-diphosphate from D-ribose 5-phosphate (route I): step 1/1. In terms of biological role, involved in the biosynthesis of the central metabolite phospho-alpha-D-ribosyl-1-pyrophosphate (PRPP) via the transfer of pyrophosphoryl group from ATP to 1-hydroxyl of ribose-5-phosphate (Rib-5-P). This is Ribose-phosphate pyrophosphokinase from Clostridium acetobutylicum (strain ATCC 824 / DSM 792 / JCM 1419 / IAM 19013 / LMG 5710 / NBRC 13948 / NRRL B-527 / VKM B-1787 / 2291 / W).